The sequence spans 659 residues: MTDRIRALDDATVARIAAGEVVERPASVVKELVENSLDAGAASVDVSVDAGGTDRIVVADDGRGMTGDDLRMAVRQHTTSKLDDASGLDGVGTLGFRGEALYTIGSVAELTVTTRPRNAGDTGARITVDHGDAGSVAPAGHPAGTTVEVTDLFGETPARRKYLKRAATEFGHVNRAVTRYALANPDVAVSLTHDGREVFATTGTGDVQDAALAVYGREVAQSLRTVDADPAADSVERVHGYVSDPEVTRSTREYLATFVNGRAVTDAVLREAVLDGYGDQLAPDRYPFAVLFVDCEGVDANVHPRKLEVRFEDEAGVKAAVEAGVRDALLDAGLVRAGAPRGASKPGDAEISPEHSPTDRDAGAAGGGDAAGQSDGNGQRTAASGATSESPASAFETGGGDEAADSAASTDGTRERPGSGTESRTGRFDAPAENARLPTGAGGPEADDQDTTSERDSLPDLRVLGQLHDTYVVAEAGDGLVLVDQHAADERVHYERLQARVDGASQALVAPAELELTAGEAAVFEAALGGLRELGFDAELAGRTARVTAVPAVLADALDAELARDVLSSFLADADGTPVADAADAVLADLACSPAIKGNTSLAEGSVVALLDALDACENPYACPHGRPTIVEVDGDELAARFERDYPGHAGRRREDAGN.

Residues 338-459 (GAPRGASKPG…DTTSERDSLP (122 aa)) form a disordered region. Basic and acidic residues predominate over residues 352–362 (SPEHSPTDRDA). Residues 374–391 (SDGNGQRTAASGATSESP) show a composition bias toward polar residues.

This sequence belongs to the DNA mismatch repair MutL/HexB family.

This protein is involved in the repair of mismatches in DNA. It is required for dam-dependent methyl-directed DNA mismatch repair. May act as a 'molecular matchmaker', a protein that promotes the formation of a stable complex between two or more DNA-binding proteins in an ATP-dependent manner without itself being part of a final effector complex. In Halobacterium salinarum (strain ATCC 29341 / DSM 671 / R1), this protein is DNA mismatch repair protein MutL.